The following is a 422-amino-acid chain: Probable Na(+)/H(+) antiporter 2 (422 aa).

The next 13 membrane-spanning stretches (helical) occupy residues 3–23 (IVLF…IAKI), 28–48 (GIPD…LNVI), 52–72 (IVES…LFIG), 93–113 (ILAL…VFHL), 119–139 (IGLL…IPIF), 157–177 (VFND…LGLA), 183–203 (ILEF…AGKF), 216–236 (YIAP…EGIF), 242–262 (YEIS…NVIV), 281–301 (LSIF…SIPL), 307–327 (LPAF…GVLI), 341–361 (IYLA…AMVY), and 384–404 (LAGT…VLEA).

This sequence belongs to the monovalent cation:proton antiporter 1 (CPA1) transporter (TC 2.A.36) family.

The protein localises to the cell membrane. Its function is as follows. This is probably a Na(+)/H(+) antiporter. This chain is Probable Na(+)/H(+) antiporter 2, found in Methanocaldococcus jannaschii (strain ATCC 43067 / DSM 2661 / JAL-1 / JCM 10045 / NBRC 100440) (Methanococcus jannaschii).